Here is a 135-residue protein sequence, read N- to C-terminus: Lactoylglutathione lyase (135 aa).

The VOC domain maps to 2-126; that stretch reads RLLHTMLRVG…DGYKIELIEA (125 aa). His-5 contacts Ni(2+). Arg-9 provides a ligand contact to substrate. Glu-56 contacts Ni(2+). The substrate site is built by Asn-60 and His-74. The Ni(2+) site is built by His-74 and Glu-122. Glu-122 (proton donor/acceptor) is an active-site residue.

This sequence belongs to the glyoxalase I family. Homodimer. The cofactor is Ni(2+).

The enzyme catalyses (R)-S-lactoylglutathione = methylglyoxal + glutathione. The protein operates within secondary metabolite metabolism; methylglyoxal degradation; (R)-lactate from methylglyoxal: step 1/2. Functionally, catalyzes the conversion of hemimercaptal, formed from methylglyoxal and glutathione, to S-lactoylglutathione. This Salmonella typhi protein is Lactoylglutathione lyase (gloA).